Here is a 514-residue protein sequence, read N- to C-terminus: Beta-galactoside alpha-2,6-sialyltransferase 2 (514 aa).

Topologically, residues 1–10 (MKSSLKQWRR) are cytoplasmic. Residues 11–31 (LALGLILVWALLFLALLSYFM) traverse the membrane as a helical; Signal-anchor for type II membrane protein segment. The Lumenal portion of the chain corresponds to 32 to 514 (ESRVDDPHAA…PGFNKVHCEP (483 aa)). Positions 70–92 (ATSSAPSTSSNTQQEQSQEENPS) are enriched in low complexity. The disordered stretch occupies residues 70-183 (ATSSAPSTSS…TKRVARHGSS (114 aa)). Residues 119–132 (FGTQDVGSRSTGVS) are compositionally biased toward polar residues. A compositionally biased stretch (acidic residues) spans 145-166 (PQEDEDEEEEVIGGEEEDEEGG). Disulfide bonds link cysteine 246–cysteine 512, cysteine 289–cysteine 441, and cysteine 459–cysteine 470. N-linked (GlcNAc...) asparagine glycosylation is found at asparagine 330, asparagine 350, and asparagine 357.

The protein belongs to the glycosyltransferase 29 family.

Its subcellular location is the golgi apparatus. It localises to the golgi stack membrane. It catalyses the reaction a beta-D-galactoside + CMP-N-acetyl-beta-neuraminate = an N-acetyl-alpha-neuraminyl-(2-&gt;6)-beta-D-galactosyl derivative + CMP + H(+). In terms of biological role, transfers sialic acid from the donor of substrate CMP-sialic acid to galactose containing acceptor substrates. This chain is Beta-galactoside alpha-2,6-sialyltransferase 2 (st6gal2), found in Danio rerio (Zebrafish).